The primary structure comprises 861 residues: Leucine--tRNA ligase (861 aa).

A 'HIGH' region motif is present at residues 42 to 52; the sequence is PYPSGKLHMGH. Residues 620-624 carry the 'KMSKS' region motif; that stretch reads KMSKS. K623 is a binding site for ATP.

Belongs to the class-I aminoacyl-tRNA synthetase family.

Its subcellular location is the cytoplasm. The catalysed reaction is tRNA(Leu) + L-leucine + ATP = L-leucyl-tRNA(Leu) + AMP + diphosphate. The sequence is that of Leucine--tRNA ligase from Hahella chejuensis (strain KCTC 2396).